We begin with the raw amino-acid sequence, 490 residues long: MWRETKLLLIDDNLDRSRDLAVILNFLGEDQLTCNSEDWREVAAGLSNSREALCVLLGSVESKGGAVELLKQLASWDEYLPILLIGEPAPADWPEELRRRVLASLEMPPSYNKLLDSLHRAQVYREMYDQARERGRSREPNLFRSLVGTSRAIQQVRQMMQQVADTDASVLILGESGTGKEVVARNLHYHSKRREGPFVPVNCGAIPAELLESELFGHEKGAFTGAITSRAGRFELANGGTLFLDEIGDMPLPMQVKLLRVLQERTFERVGSNKTQNVDVRIIAATHKNLEKMIEDGTFREDLYYRLNVFPIEMAPLRERVEDIALLLNELISRMEHEKRGSIRFNSAAIMSLCRHDWPGNVRELANLVERLAIMHPYGVIGVGELPKKFRHVDDEDEQLASSLREELEERAAINAGLPGMDAPAMLPAEGLDLKDYLANLEQGLIQQALDDAGGVVARAAERLRIRRTTLVEKMRKYGMSRRDDDLSDD.

Leu142 serves as a coordination point for 3',3'-c-di-GMP. Residues Val147 and 177–182 each bind ADP; that span reads GTGKEV. 3',3'-c-di-GMP-binding positions include 186 to 189 and 330 to 341; these read NLHY and ELISRMEHEKRG. Residues Arg334 and Arg363 each contribute to the ADP site.

As to quaternary structure, forms homodimers. Forms homohexamers that inhibit transcription initiation. Interacts with FleN; this complex is formed in the presence as well as in the absence of c-di-GMP or ATP.

With respect to regulation, C-di-GMP interaction leads to active site obstruction, hexameric ring destabilization thus relieving DNA bending and activating gene transcription. AAA+ ATPase enhancer-binding protein that acts as a transcription regulator and plays a role in the modulation of mucin adhesion and flagellar gene expression. In addition to flagella genes, also regulates expression of biofilm-related genes. Functions as a transcriptional repressor in the absence of c-di-GMP and as an activator when c-di-GMP is present. The sequence is that of Transcriptional regulator FleQ from Pseudomonas aeruginosa (strain ATCC 15692 / DSM 22644 / CIP 104116 / JCM 14847 / LMG 12228 / 1C / PRS 101 / PAO1).